The primary structure comprises 215 residues: Adenylate kinase (215 aa).

Position 10-15 (10-15) interacts with ATP; sequence GAGKGT. The interval 30–59 is NMP; sequence STGDIFRANISGKTELGMKAKGYMDKGLLV. Residues Thr-31, Arg-36, 57 to 59, 85 to 88, and Gln-92 contribute to the AMP site; these read LLV and GFPR. Residues 126 to 163 are LID; that stretch reads GRRVCSKCGASYHIEYNPTKVEGICDLCGSPVVQRKDD. An ATP-binding site is contributed by Arg-127. Positions 130 and 133 each coordinate Zn(2+). 136–137 lines the ATP pocket; that stretch reads SY. Zn(2+)-binding residues include Cys-150 and Cys-153. Residues Arg-160 and Arg-171 each contribute to the AMP site. Gln-199 is a binding site for ATP.

The protein belongs to the adenylate kinase family. As to quaternary structure, monomer.

The protein resides in the cytoplasm. It carries out the reaction AMP + ATP = 2 ADP. It participates in purine metabolism; AMP biosynthesis via salvage pathway; AMP from ADP: step 1/1. Its function is as follows. Catalyzes the reversible transfer of the terminal phosphate group between ATP and AMP. Plays an important role in cellular energy homeostasis and in adenine nucleotide metabolism. The protein is Adenylate kinase of Clostridium acetobutylicum (strain ATCC 824 / DSM 792 / JCM 1419 / IAM 19013 / LMG 5710 / NBRC 13948 / NRRL B-527 / VKM B-1787 / 2291 / W).